The sequence spans 430 residues: 3-phosphoshikimate 1-carboxyvinyltransferase (430 aa).

3 residues coordinate 3-phosphoshikimate: Lys21, Ser22, and Arg26. Lys21 is a binding site for phosphoenolpyruvate. Positions 94 and 122 each coordinate phosphoenolpyruvate. Residues Ser168, Gln170, Asp315, and Lys342 each contribute to the 3-phosphoshikimate site. Gln170 serves as a coordination point for phosphoenolpyruvate. The active-site Proton acceptor is Asp315. Phosphoenolpyruvate is bound by residues Arg346 and Arg389.

Belongs to the EPSP synthase family. In terms of assembly, monomer.

It localises to the cytoplasm. It carries out the reaction 3-phosphoshikimate + phosphoenolpyruvate = 5-O-(1-carboxyvinyl)-3-phosphoshikimate + phosphate. The protein operates within metabolic intermediate biosynthesis; chorismate biosynthesis; chorismate from D-erythrose 4-phosphate and phosphoenolpyruvate: step 6/7. In terms of biological role, catalyzes the transfer of the enolpyruvyl moiety of phosphoenolpyruvate (PEP) to the 5-hydroxyl of shikimate-3-phosphate (S3P) to produce enolpyruvyl shikimate-3-phosphate and inorganic phosphate. The protein is 3-phosphoshikimate 1-carboxyvinyltransferase of Salinibacter ruber (strain DSM 13855 / M31).